The chain runs to 177 residues: Large ribosomal subunit protein uL6 (177 aa).

The protein belongs to the universal ribosomal protein uL6 family. In terms of assembly, part of the 50S ribosomal subunit.

Its function is as follows. This protein binds to the 23S rRNA, and is important in its secondary structure. It is located near the subunit interface in the base of the L7/L12 stalk, and near the tRNA binding site of the peptidyltransferase center. The polypeptide is Large ribosomal subunit protein uL6 (Rickettsia conorii (strain ATCC VR-613 / Malish 7)).